A 614-amino-acid polypeptide reads, in one-letter code: Inactive leucine-rich repeat receptor-like serine/threonine-protein kinase At5g24100 (614 aa).

The signal sequence occupies residues 1–21 (MSRGRSFIFYFVLFLFFGSSA). At 22–251 (LYSQVTGDLA…KNGIYISEPA (230 aa)) the chain is on the extracellular side. The N-linked (GlcNAc...) asparagine glycan is linked to Asn53. LRR repeat units lie at residues 71-95 (GTRV…TISR), 96-120 (LSEL…FLQL), 121-146 (KKLK…TWTN), 148-167 (TVLD…GFAN), 168-190 (LTGL…DLNL), and 191-214 (PGLR…LKRF). Asn146, Asn158, and Asn167 each carry an N-linked (GlcNAc...) asparagine glycan. 2 N-linked (GlcNAc...) asparagine glycosylation sites follow: Asn197 and Asn202. Residues 252-272 (ILGIAISVCFVIFFVIAVVII) form a helical membrane-spanning segment. Topologically, residues 273-614 (VCYVKRQRKS…VETLEEIERD (342 aa)) are cytoplasmic. Positions 341–611 (IASAEFLGKG…VKVVETLEEI (271 aa)) constitute a Protein kinase domain. A Phosphoserine modification is found at Ser343. ATP is bound by residues 347 to 355 (LGKGVFGMT) and Lys369. Position 420 is a phosphoserine (Ser420). Phosphothreonine is present on residues Thr441, Thr514, and Thr591. An LRR 7 repeat occupies 578 to 601 (AKLLQMLQLGTSCTAMVPAKRPDM).

The protein belongs to the protein kinase superfamily. Ser/Thr protein kinase family.

The protein resides in the cell membrane. The chain is Inactive leucine-rich repeat receptor-like serine/threonine-protein kinase At5g24100 from Arabidopsis thaliana (Mouse-ear cress).